A 428-amino-acid polypeptide reads, in one-letter code: BTB/POZ domain-containing protein KCTD16 (428 aa).

The region spanning 25–98 (EVVELNVGGQ…LRDRQVVLPD (74 aa)) is the BTB domain. Y112 carries the post-translational modification Phosphotyrosine. Phosphoserine is present on residues S130, S137, S143, and S146.

As to quaternary structure, homopentamer; forms an open pentamer. In contrast to other BTB domain-containing proteins, does not interact with CUL3. Interacts as a tetramer with GABRB1 and GABRB2.

The protein resides in the presynaptic cell membrane. The protein localises to the postsynaptic cell membrane. Its function is as follows. Auxiliary subunit of GABA-B receptors that determine the pharmacology and kinetics of the receptor response. Increases agonist potency and markedly alter the G-protein signaling of the receptors by accelerating onset and promoting desensitization. The sequence is that of BTB/POZ domain-containing protein KCTD16 (KCTD16) from Homo sapiens (Human).